A 133-amino-acid chain; its full sequence is Probable mitochondrial pyruvate carrier 2 (133 aa).

3 consecutive transmembrane segments (helical) span residues 40–57 (VFFW…AGLA), 73–91 (ALFA…ITPI), and 100–116 (FFVM…IAHY).

The protein belongs to the mitochondrial pyruvate carrier (MPC) (TC 2.A.105) family.

Its subcellular location is the mitochondrion inner membrane. In terms of biological role, may mediate the uptake of pyruvate into mitochondria. The chain is Probable mitochondrial pyruvate carrier 2 from Caenorhabditis elegans.